Here is a 68-residue protein sequence, read N- to C-terminus: Toxin Cg2 (68 aa).

Residues Lys1–Ser66 form the LCN-type CS-alpha/beta domain. 4 disulfide bridges follow: Cys12/Cys65, Cys16/Cys41, Cys25/Cys46, and Cys29/Cys48.

It belongs to the long (4 C-C) scorpion toxin superfamily. Sodium channel inhibitor family. As to expression, expressed by the venom gland.

Its subcellular location is the secreted. Functionally, binds to sodium channels (Nav) and inhibits them. The sequence is that of Toxin Cg2 from Centruroides gracilis (Slenderbrown scorpion).